A 373-amino-acid polypeptide reads, in one-letter code: Histidinol-phosphate aminotransferase (373 aa).

A compositionally biased stretch (polar residues) spans 1 to 10 (MTGVPGSSIT). Positions 1–45 (MTGVPGSSITLDDLPLRDDLRGKSPYGAPQLSVPVRLNTNENPHP) are disordered. N6-(pyridoxal phosphate)lysine is present on K237.

It belongs to the class-II pyridoxal-phosphate-dependent aminotransferase family. Histidinol-phosphate aminotransferase subfamily. As to quaternary structure, homodimer. Requires pyridoxal 5'-phosphate as cofactor.

It catalyses the reaction L-histidinol phosphate + 2-oxoglutarate = 3-(imidazol-4-yl)-2-oxopropyl phosphate + L-glutamate. The protein operates within amino-acid biosynthesis; L-histidine biosynthesis; L-histidine from 5-phospho-alpha-D-ribose 1-diphosphate: step 7/9. The polypeptide is Histidinol-phosphate aminotransferase (Mycolicibacterium vanbaalenii (strain DSM 7251 / JCM 13017 / BCRC 16820 / KCTC 9966 / NRRL B-24157 / PYR-1) (Mycobacterium vanbaalenii)).